An 85-amino-acid polypeptide reads, in one-letter code: UPF0291 protein SGO_0570 (85 aa).

The segment at 56-85 (EDGNDVTPEKLRQVQREKGLHGRSLDDPNS) is disordered. Residues 62 to 85 (TPEKLRQVQREKGLHGRSLDDPNS) are compositionally biased toward basic and acidic residues.

The protein belongs to the UPF0291 family.

It localises to the cytoplasm. In Streptococcus gordonii (strain Challis / ATCC 35105 / BCRC 15272 / CH1 / DL1 / V288), this protein is UPF0291 protein SGO_0570.